The following is a 38-amino-acid chain: Large ribosomal subunit protein bL36 (38 aa).

The protein belongs to the bacterial ribosomal protein bL36 family.

This is Large ribosomal subunit protein bL36 from Fervidobacterium nodosum (strain ATCC 35602 / DSM 5306 / Rt17-B1).